We begin with the raw amino-acid sequence, 576 residues long: Proline--tRNA ligase (576 aa).

It belongs to the class-II aminoacyl-tRNA synthetase family. ProS type 1 subfamily. As to quaternary structure, homodimer.

The protein resides in the cytoplasm. It catalyses the reaction tRNA(Pro) + L-proline + ATP = L-prolyl-tRNA(Pro) + AMP + diphosphate. Functionally, catalyzes the attachment of proline to tRNA(Pro) in a two-step reaction: proline is first activated by ATP to form Pro-AMP and then transferred to the acceptor end of tRNA(Pro). As ProRS can inadvertently accommodate and process non-cognate amino acids such as alanine and cysteine, to avoid such errors it has two additional distinct editing activities against alanine. One activity is designated as 'pretransfer' editing and involves the tRNA(Pro)-independent hydrolysis of activated Ala-AMP. The other activity is designated 'posttransfer' editing and involves deacylation of mischarged Ala-tRNA(Pro). The misacylated Cys-tRNA(Pro) is not edited by ProRS. This is Proline--tRNA ligase from Leptospira borgpetersenii serovar Hardjo-bovis (strain L550).